We begin with the raw amino-acid sequence, 125 residues long: UPF0332 protein AF_0298 (125 aa).

Belongs to the UPF0332 family.

In Archaeoglobus fulgidus (strain ATCC 49558 / DSM 4304 / JCM 9628 / NBRC 100126 / VC-16), this protein is UPF0332 protein AF_0298.